The following is a 134-amino-acid chain: Histone H2A (134 aa).

The segment covering 1–11 (MTGGGKSGGKA) has biased composition (gly residues). The disordered stretch occupies residues 1–25 (MTGGGKSGGKASGSKNAQSRSSKAG). Residues Lys6 and Lys10 each carry the N6-acetyllysine modification. Gln107 is subject to N5-methylglutamine. Ser131 is modified (phosphoserine). The [ST]-Q motif motif lies at 131-132 (SQ).

It belongs to the histone H2A family. In terms of assembly, the nucleosome is a histone octamer containing two molecules each of H2A, H2B, H3 and H4 assembled in one H3-H4 heterotetramer and two H2A-H2B heterodimers. The octamer wraps approximately 147 bp of DNA. Phosphorylated to form H2AS128ph (gamma-H2A) in response to DNA double-strand breaks (DSBs) generated by exogenous genotoxic agents and by stalled replication forks. Phosphorylation is dependent on the DNA damage checkpoint kinases mec-1/ATR and tel-1/ATM, spreads on either side of a detected DSB site and may mark the surrounding chromatin for recruitment of proteins required for DNA damage signaling and repair. Gamma-H2A is removed from the DNA prior to the strand invasion-primer extension step of the repair process and subsequently dephosphorylated. Dephosphorylation is necessary for efficient recovery from the DNA damage checkpoint. In terms of processing, acetylated by esa-1 to form H2AK4ac and H2AK7ac.

The protein resides in the nucleus. Its subcellular location is the chromosome. In terms of biological role, core component of nucleosome which plays a central role in DNA double strand break (DSB) repair. Nucleosomes wrap and compact DNA into chromatin, limiting DNA accessibility to the cellular machineries which require DNA as a template. Histones thereby play a central role in transcription regulation, DNA repair, DNA replication and chromosomal stability. DNA accessibility is regulated via a complex set of post-translational modifications of histones, also called histone code, and nucleosome remodeling. This is Histone H2A (hh2a) from Neurospora crassa (strain ATCC 24698 / 74-OR23-1A / CBS 708.71 / DSM 1257 / FGSC 987).